The following is a 249-amino-acid chain: Large ribosomal subunit protein uL1 (249 aa).

This sequence belongs to the universal ribosomal protein uL1 family. As to quaternary structure, part of the 50S ribosomal subunit.

Binds directly to 23S rRNA. The L1 stalk is quite mobile in the ribosome, and is involved in E site tRNA release. In terms of biological role, protein L1 is also a translational repressor protein, it controls the translation of the L11 operon by binding to its mRNA. The chain is Large ribosomal subunit protein uL1 from Orientia tsutsugamushi (strain Ikeda) (Rickettsia tsutsugamushi).